Here is a 497-residue protein sequence, read N- to C-terminus: Pentatricopeptide repeat-containing protein At2g36240 (497 aa).

PPR repeat units lie at residues 156–186 (LEPIFRSAIDAYCRARKMDYALLAFDTMKRL), 192–226 (NVGVYNTVVNGYVKSGDMDKALRFYQRMGKERAKP), 227–261 (DVCTFNILINGYCRSSKFDLALDLFREMKEKGCEP), 262–296 (NVVSFNTLIRGFLSSGKIEEGVKMAYEMIELGCRF), 297–331 (SEATCEILVDGLCREGRVDDACGLVLDLLNKRVLP), 332–366 (SEFDYGSLVEKLCGENKAVRAMEMMEELWKKGQTP), 367–401 (CFIACTTLVEGLRKSGRTEKASGFMEKMMNAGILP), 402–436 (DSVTFNLLLRDLCSSDHSTDANRLRLLASSKGYEP), and 437–471 (DETTYHVLVSGFTKEGRRKEGEVLVNEMLDKDMLP).

It belongs to the PPR family. P subfamily.

The chain is Pentatricopeptide repeat-containing protein At2g36240 from Arabidopsis thaliana (Mouse-ear cress).